The chain runs to 95 residues: Protein Vpr (95 aa).

Positions 1–42 are homooligomerization; the sequence is MERAPEDAGPQREPYNEWALELLEELKNEAVRHFPRIWLHGL. Serine 79, serine 93, and serine 95 each carry phosphoserine; by host.

The protein belongs to the HIV-1 VPR protein family. In terms of assembly, homooligomer, may form homodimer. Interacts with p6-gag region of the Pr55 Gag precursor protein through a (Leu-X-X)4 motif near the C-terminus of the P6gag protein. Interacts with host UNG. May interact with host RAD23A/HHR23A. Interacts with host VPRBP/DCAF1, leading to hijack the CUL4A-RBX1-DDB1-DCAF1/VPRBP complex, mediating ubiquitination of host proteins such as TERT and ZGPAT and arrest of the cell cycle in G2 phase. Phosphorylated on several residues by host. These phosphorylations regulate VPR activity for the nuclear import of the HIV-1 pre-integration complex.

The protein localises to the virion. Its subcellular location is the host nucleus. The protein resides in the host extracellular space. Its function is as follows. During virus replication, may deplete host UNG protein, and incude G2-M cell cycle arrest. Acts by targeting specific host proteins for degradation by the 26S proteasome, through association with the cellular CUL4A-DDB1 E3 ligase complex by direct interaction with host VPRPB/DCAF-1. Cell cycle arrest reportedly occurs within hours of infection and is not blocked by antiviral agents, suggesting that it is initiated by the VPR carried into the virion. Additionally, VPR induces apoptosis in a cell cycle dependent manner suggesting that these two effects are mechanistically linked. Detected in the serum and cerebrospinal fluid of AIDS patient, VPR may also induce cell death to bystander cells. In terms of biological role, during virus entry, plays a role in the transport of the viral pre-integration (PIC) complex to the host nucleus. This function is crucial for viral infection of non-dividing macrophages. May act directly at the nuclear pore complex, by binding nucleoporins phenylalanine-glycine (FG)-repeat regions. The chain is Protein Vpr from Human immunodeficiency virus type 1 group N (isolate YBF30) (HIV-1).